The following is a 494-amino-acid chain: Glutamyl-tRNA(Gln) amidotransferase subunit A (494 aa).

Catalysis depends on charge relay system residues K78 and S158. S182 (acyl-ester intermediate) is an active-site residue.

This sequence belongs to the amidase family. GatA subfamily. Heterotrimer of A, B and C subunits.

The enzyme catalyses L-glutamyl-tRNA(Gln) + L-glutamine + ATP + H2O = L-glutaminyl-tRNA(Gln) + L-glutamate + ADP + phosphate + H(+). Its function is as follows. Allows the formation of correctly charged Gln-tRNA(Gln) through the transamidation of misacylated Glu-tRNA(Gln) in organisms which lack glutaminyl-tRNA synthetase. The reaction takes place in the presence of glutamine and ATP through an activated gamma-phospho-Glu-tRNA(Gln). This is Glutamyl-tRNA(Gln) amidotransferase subunit A from Xanthobacter autotrophicus (strain ATCC BAA-1158 / Py2).